The primary structure comprises 647 residues: LIM domain kinase 1 (647 aa).

2 LIM zinc-binding domains span residues 25–75 (CASC…CKKD) and 84–137 (CHGC…CGHC). One can recognise a PDZ domain in the interval 165-258 (LVSIPASSHG…LLQLTLEHDP (94 aa)). Ser210 carries the phosphoserine modification. Thr229 carries the phosphothreonine modification. The tract at residues 260-319 (DTLGHGLGPETSPLSSPAYTPSGEAGSSARQKPVLRSCSIDRSPGAGSLGSPASQRKDLG) is disordered. Residues Ser298, Ser302, Ser307, and Ser310 each carry the phosphoserine modification. The segment covering 302–313 (SPGAGSLGSPAS) has biased composition (low complexity). A Phosphoserine; by MAPKAPK2 modification is found at Ser323. Residue Ser337 is modified to Phosphoserine. Residues 339–604 (LIHGEVLGKG…PSFVKLEHWL (266 aa)) enclose the Protein kinase domain. ATP contacts are provided by residues 345-353 (LGKGCFGQA) and Lys368. Asp460 is a catalytic residue. Thr508 is modified (phosphothreonine; by ROCK1 and PAK1).

This sequence belongs to the protein kinase superfamily. TKL Ser/Thr protein kinase family. Interacts (via LIM domain) with the cytoplasmic domain of NRG1. Interacts with NISCH. Interacts with RLIM and RNF6. Self-associates to form homodimers. Interacts with HSP90AA1; this interaction promotes LIMK1 dimerization and subsequent transphosphorylation. Interacts with CDKN1C. Interacts with SSH1. Interacts with ROCK1. Interacts (via LIM zinc-binding domains) with FAM89B/LRAP25 (via LRR repeat). Forms a tripartite complex with CDC42BPA, CDC42BPB and FAM89B/LRAP25. In terms of processing, autophosphorylated. Phosphorylated on Thr-508 by ROCK1 and PAK1, resulting in activation. Phosphorylated by PAK4 which increases the ability of LIMK1 to phosphorylate cofilin. Phosphorylated at Ser-323 by MAPKAPK2 during activation of VEGFA-induced signaling, which results in activation of LIMK1 and promotion of actin reorganization, cell migration, and tubule formation of endothelial cells. Dephosphorylated and inactivated by SSH1. Phosphorylated by CDC42BP. Post-translationally, ubiquitinated. 'Lys-48'-linked polyubiquitination by RNF6 leads to proteasomal degradation through the 26S proteasome, modulating LIMK1 levels in the growth cone and its effect on axonal outgrowth. Also polyubiquitinated by RLIM. In terms of tissue distribution, highest expression in both adult and fetal nervous system. Detected ubiquitously throughout the different regions of adult brain, with highest levels in the cerebral cortex. Expressed to a lesser extent in heart and skeletal muscle.

The protein resides in the cytoplasm. It is found in the nucleus. Its subcellular location is the cytoskeleton. It localises to the cell projection. The protein localises to the lamellipodium. The enzyme catalyses L-seryl-[protein] + ATP = O-phospho-L-seryl-[protein] + ADP + H(+). It catalyses the reaction L-threonyl-[protein] + ATP = O-phospho-L-threonyl-[protein] + ADP + H(+). In terms of biological role, serine/threonine-protein kinase that plays an essential role in the regulation of actin filament dynamics. Acts downstream of several Rho family GTPase signal transduction pathways. Activated by upstream kinases including ROCK1, PAK1 and PAK4, which phosphorylate LIMK1 on a threonine residue located in its activation loop. LIMK1 subsequently phosphorylates and inactivates the actin binding/depolymerizing factors cofilin-1/CFL1, cofilin-2/CFL2 and destrin/DSTN, thereby preventing the cleavage of filamentous actin (F-actin), and stabilizing the actin cytoskeleton. In this way LIMK1 regulates several actin-dependent biological processes including cell motility, cell cycle progression, and differentiation. Phosphorylates TPPP on serine residues, thereby promoting microtubule disassembly. Stimulates axonal outgrowth and may be involved in brain development. Its function is as follows. Has a dominant negative effect on actin cytoskeletal changes. Required for atypical chemokine receptor ACKR2-induced phosphorylation of cofilin (CFL1). The protein is LIM domain kinase 1 (LIMK1) of Homo sapiens (Human).